Consider the following 72-residue polypeptide: Cell division protein ZapB (72 aa).

Residues 3–71 are a coiled coil; sequence LSIIDQLEEK…LRSLLGQIDN (69 aa).

It belongs to the ZapB family. In terms of assembly, homodimer. The ends of the coiled-coil dimer bind to each other, forming polymers. Interacts with FtsZ.

It localises to the cytoplasm. Non-essential, abundant cell division factor that is required for proper Z-ring formation. It is recruited early to the divisome by direct interaction with FtsZ, stimulating Z-ring assembly and thereby promoting cell division earlier in the cell cycle. Its recruitment to the Z-ring requires functional FtsA or ZipA. The polypeptide is Cell division protein ZapB (Haemophilus ducreyi (strain 35000HP / ATCC 700724)).